The following is a 206-amino-acid chain: CASP-like protein 2C1 (206 aa).

The Cytoplasmic portion of the chain corresponds to 1 to 31 (MSVLGVGPRTVTPHLRKGMMESSSGISLARA). A helical membrane pass occupies residues 32 to 52 (EAFLRLFAILVLVLTACLLGF). Topologically, residues 53–71 (DTQTKLLFSTIKKTATFRD) are extracellular. Residues 72–92 (LGALQVVVYVDSVAAGYNLLQ) traverse the membrane as a helical segment. Residues 93–111 (LGRGFISAKLKGKLINVSY) are Cytoplasmic-facing. A helical membrane pass occupies residues 112 to 132 (VTLPWVCFLLDQAAVYTVFSA). At 133 to 161 (NTAALQASIIAVTGESSLQWMKVCNRYTR) the chain is on the extracellular side. A helical membrane pass occupies residues 162 to 182 (FCIQVGGALLSGYLASLLMVL). Residues 183–206 (LSSLSAFSLFRLYSPKQFHLLKPT) are Cytoplasmic-facing.

Belongs to the Casparian strip membrane proteins (CASP) family. In terms of assembly, homodimer and heterodimers.

It is found in the cell membrane. This is CASP-like protein 2C1 from Vitis vinifera (Grape).